A 183-amino-acid chain; its full sequence is A-type ATP synthase subunit E (183 aa).

The protein belongs to the V-ATPase E subunit family. Has multiple subunits with at least A(3), B(3), C, D, E, F, H, I and proteolipid K(x).

The protein localises to the cell membrane. In terms of biological role, component of the A-type ATP synthase that produces ATP from ADP in the presence of a proton gradient across the membrane. The sequence is that of A-type ATP synthase subunit E from Methanococcoides burtonii (strain DSM 6242 / NBRC 107633 / OCM 468 / ACE-M).